Reading from the N-terminus, the 136-residue chain is Large ribosomal subunit protein uL16 (136 aa).

It belongs to the universal ribosomal protein uL16 family. Part of the 50S ribosomal subunit.

Binds 23S rRNA and is also seen to make contacts with the A and possibly P site tRNAs. The protein is Large ribosomal subunit protein uL16 of Mannheimia succiniciproducens (strain KCTC 0769BP / MBEL55E).